A 122-amino-acid polypeptide reads, in one-letter code: Bet1-like SNARE 1-1 (122 aa).

The Cytoplasmic portion of the chain corresponds to 1 to 103 (MNPRREPRGG…VFETKSSRRM (103 aa)). A t-SNARE coiled-coil homology domain is found at 32-94 (EINEHENERA…SGTMDRFKTV (63 aa)). Residue S56 is modified to Phosphoserine. Residues 104-121 (LTLVASFVGLFLVIYYLT) traverse the membrane as a helical; Anchor for type IV membrane protein segment. Residue R122 is a topological domain, vesicular.

It belongs to the BET1 family.

The protein resides in the golgi apparatus membrane. It is found in the endoplasmic reticulum membrane. Required for vesicular transport from the ER to the Golgi complex. Functions as a SNARE associated with ER-derived vesicles. This chain is Bet1-like SNARE 1-1 (BET11), found in Arabidopsis thaliana (Mouse-ear cress).